Consider the following 334-residue polypeptide: MVDLSKDLQFFKVFLPEFGSHELVIPPAFIDMLEKPLPKEAFLVDEIGRLWCVETKTEDTEERFCVFFTKGWQSFANDQSLEFGDFLVFSYDGDSRFSVTIFANDGCKKDVGVVSTTDRSRVSLDEEEPDDIFTKPDRMRDCDCGQSINRKRKRDSVNEDPHVLVDDKPEYVSTYKTKPEHSEKTQRTVNRAGDTCDISWFPEKKHNGFEESVYKPKHPHFVRNITRGSLQKLELPLTFLRSNGIELEEDIELCDESGKKWPLKILNHDRGFKFSHESWLCFCKSHEMILTNKCLFEFIVPSNGRCSEILVRIVSGRLPTTMTKNNYQVIDMQP.

2 DNA-binding regions (TF-B3) span residues leucine 8–aspartate 105 and histidine 218–arginine 317.

Its subcellular location is the nucleus. This chain is Putative B3 domain-containing protein At5g66980, found in Arabidopsis thaliana (Mouse-ear cress).